We begin with the raw amino-acid sequence, 661 residues long: MNHFSLISEYKPAGDQPKAIDEIIAGLNSKKRSQMLLGITGSGKTFTMANIIERTNRPTLIMAHNKTLAAQIYSEMKSIFPKNAVEYFVSYYDYYQPEAYIARTDTFIEKDSSINEHIDLMRHSATRSLLERRDVIVVASVSCIYGLGSPDLYYQMTVNLEPGKSYPRDKLLNDLINLQYKRNDMGFERGCFRVKGDNIDIFPSHYSDKAWRLSFFSNELEYIHEFDPLTGEKLAKLDKAIVFGHSHFVMPQDTVNNAISGIEEELQKRLEFLKSQNKLLETQRLNQRTQYDLEMLTETGSCKGVENYSRFFTGRNAGEPPPTLFEYLPKDALLFVDESHVSVPQIKAMYNSDRARKEVLVEHGFRLPSALDNRPLKFEEWEKFRPQTVFVSATPGPFELEETGGTVVELIIRPTGLLDPECIIKPATKQVEDLISEIQATVAKGLRVLVTTLTKKMAEDLTAYLQELKYKTSYLHSNVHTLERIEILQDLRQGTIDILVGINLLREGLDIPECGLVAILDADKEGFLRSEVSLIQTIGRAARNSEGRVILYADKMTKSIDKALSETLRRRQIQQEYNEKHGIIPKTINRAIHALATLERVDSKCDTKQAHTLFDNTAKLKANINKLNKEMLKAASNLEFEQAAKLRDQLKTLEAAARELS.

The 158-residue stretch at 25–182 (AGLNSKKRSQ…NDLINLQYKR (158 aa)) folds into the Helicase ATP-binding domain. An ATP-binding site is contributed by 38-45 (GITGSGKT). The short motif at 91–114 (YYDYYQPEAYIARTDTFIEKDSSI) is the Beta-hairpin element. A Helicase C-terminal domain is found at 430-592 (QVEDLISEIQ…IIPKTINRAI (163 aa)). One can recognise a UVR domain in the interval 621–656 (KANINKLNKEMLKAASNLEFEQAAKLRDQLKTLEAA).

Belongs to the UvrB family. In terms of assembly, forms a heterotetramer with UvrA during the search for lesions. Interacts with UvrC in an incision complex.

It is found in the cytoplasm. Its function is as follows. The UvrABC repair system catalyzes the recognition and processing of DNA lesions. A damage recognition complex composed of 2 UvrA and 2 UvrB subunits scans DNA for abnormalities. Upon binding of the UvrA(2)B(2) complex to a putative damaged site, the DNA wraps around one UvrB monomer. DNA wrap is dependent on ATP binding by UvrB and probably causes local melting of the DNA helix, facilitating insertion of UvrB beta-hairpin between the DNA strands. Then UvrB probes one DNA strand for the presence of a lesion. If a lesion is found the UvrA subunits dissociate and the UvrB-DNA preincision complex is formed. This complex is subsequently bound by UvrC and the second UvrB is released. If no lesion is found, the DNA wraps around the other UvrB subunit that will check the other stand for damage. The chain is UvrABC system protein B from Rickettsia akari (strain Hartford).